The following is a 171-amino-acid chain: Ribosome maturation factor RimM (171 aa).

One can recognise a PRC barrel domain in the interval 96-168; it reads EDGFYDHELE…TATITPPEGL (73 aa).

This sequence belongs to the RimM family. In terms of assembly, binds ribosomal protein uS19.

It localises to the cytoplasm. Its function is as follows. An accessory protein needed during the final step in the assembly of 30S ribosomal subunit, possibly for assembly of the head region. Essential for efficient processing of 16S rRNA. May be needed both before and after RbfA during the maturation of 16S rRNA. It has affinity for free ribosomal 30S subunits but not for 70S ribosomes. The polypeptide is Ribosome maturation factor RimM (Corynebacterium glutamicum (strain ATCC 13032 / DSM 20300 / JCM 1318 / BCRC 11384 / CCUG 27702 / LMG 3730 / NBRC 12168 / NCIMB 10025 / NRRL B-2784 / 534)).